The following is a 203-amino-acid chain: Dual-action ribosomal maturation protein DarP (203 aa).

A compositionally biased stretch (polar residues) spans 1-13 (MQPMTRNSRNSPG). The tract at residues 1-39 (MQPMTRNSRNSPGSRFPGAFAPEPDMDEPKSKSQKKRDM) is disordered. A compositionally biased stretch (basic and acidic residues) spans 27-39 (DEPKSKSQKKRDM).

It belongs to the DarP family.

It localises to the cytoplasm. Functionally, member of a network of 50S ribosomal subunit biogenesis factors which assembles along the 30S-50S interface, preventing incorrect 23S rRNA structures from forming. Promotes peptidyl transferase center (PTC) maturation. In Cupriavidus pinatubonensis (strain JMP 134 / LMG 1197) (Cupriavidus necator (strain JMP 134)), this protein is Dual-action ribosomal maturation protein DarP.